A 584-amino-acid polypeptide reads, in one-letter code: Membrane protein insertase YidC (584 aa).

Transmembrane regions (helical) follow at residues 5 to 25 (SVIGLVLISLIMIVWMQFMAP), 358 to 378 (FIGNYGLIIIIFAFLIKLVTY), 428 to 448 (LGGCLPVVLQMPLLFAMFYVF), 478 to 498 (IPLYGDHIALFPILMAVAVFL), and 516 to 536 (IYIFPVMMLLFFNNMPAGLGL). The segment at 563 to 584 (ALSPVVAAPPKAPKKKKNARKR) is disordered. The segment covering 574–584 (APKKKKNARKR) has biased composition (basic residues).

This sequence belongs to the OXA1/ALB3/YidC family. Type 1 subfamily. In terms of assembly, interacts with the Sec translocase complex via SecD. Specifically interacts with transmembrane segments of nascent integral membrane proteins during membrane integration.

The protein resides in the cell inner membrane. In terms of biological role, required for the insertion and/or proper folding and/or complex formation of integral membrane proteins into the membrane. Involved in integration of membrane proteins that insert both dependently and independently of the Sec translocase complex, as well as at least some lipoproteins. Aids folding of multispanning membrane proteins. The sequence is that of Membrane protein insertase YidC from Prosthecochloris aestuarii (strain DSM 271 / SK 413).